We begin with the raw amino-acid sequence, 827 residues long: SID1 transmembrane family member 1 (827 aa).

The N-terminal stretch at 1-19 (MLDCLRLALLCALPWLLRA) is a signal peptide. Topologically, residues 20 to 309 (AVPGHQEEPL…SIKESVYVKS (290 aa)) are extracellular. N-linked (GlcNAc...) asparagine glycans are attached at residues N67, N83, N136, and N282. A helical membrane pass occupies residues 310–330 (SLFSIFVFLSFYLGCLLVVLV). Over 331–442 (HHVRFQRKSI…DRRIVSKKYK (112 aa)) the chain is Cytoplasmic. The tract at residues 344 to 409 (FGSSDGSGNM…VEESDFDTMP (66 aa)) is disordered. The segment covering 375–386 (SSSSPGRQMSSS) has biased composition (low complexity). Over residues 398 to 409 (SSVEESDFDTMP) the composition is skewed to acidic residues. Residues 443–463 (IYFWNIITIAVFYALPVMQLV) traverse the membrane as a helical segment. At 464–494 (ITYQTVVNVTGNQDICYYNFLCAHPLGVLSA) the chain is on the extracellular side. N471 carries N-linked (GlcNAc...) asparagine glycosylation. A helical membrane pass occupies residues 495–515 (FNNILSNLGHVLLGFLFLLIV). Over 516 to 541 (LRRDLLHRRALEAKDIFAMEYGIPKH) the chain is Cytoplasmic. The chain crosses the membrane as a helical span at residues 542–562 (FGLFYAMGIALMMEGVLSACY). Residues 563–572 (HVCPNYSNFQ) are Extracellular-facing. The N-linked (GlcNAc...) asparagine glycan is linked to N567. The chain crosses the membrane as a helical span at residues 573 to 590 (FDTSFMYMIAGLCMLKLY). Residues 591-600 (QTRHPDINAS) are Cytoplasmic-facing. Residues 601–621 (AYSAYASFAVVITLTVLGVVF) form a helical membrane-spanning segment. Residues 622-626 (GKNDV) lie on the Extracellular side of the membrane. Residues 627 to 647 (WFWIIFSAIHILSSLALSTQI) traverse the membrane as a helical segment. The Cytoplasmic portion of the chain corresponds to 648-683 (YYMGRFKIDLGIFRRAAMVFYTDCIQQCSRPLYMDR). A helical membrane pass occupies residues 684–704 (MVLLIVGNLVNWSFAFFGLIY). The Extracellular portion of the chain corresponds to 705–710 (RPRDFA). The helical transmembrane segment at 711–731 (SYMLGIFICNLLLYLAFYIIM) threads the bilayer. At 732-741 (KLRSSEKVLP) the chain is on the cytoplasmic side. A helical membrane pass occupies residues 742-762 (LPVFCIAATAVVWAAALYFFF). Residues 763–791 (QNLSSWEGTPAESREKNRECVLLDFFDDH) are Extracellular-facing. N764 carries N-linked (GlcNAc...) asparagine glycosylation. Residues 792–812 (DIWHFLSATALFFSFLVLLTL) form a helical membrane-spanning segment. Residues 813–827 (DDDLDVVRRDQIPVF) lie on the Cytoplasmic side of the membrane.

Belongs to the SID1 family.

It is found in the membrane. Its function is as follows. In vitro binds long double-stranded RNA (dsRNA) (500 and 700 base pairs), but not dsRNA shorter than 300 bp. Not involved in RNA autophagy, a process in which RNA is directly imported into lysosomes in an ATP-dependent manner, and degraded. The chain is SID1 transmembrane family member 1 (Sidt1) from Mus musculus (Mouse).